A 246-amino-acid chain; its full sequence is 3-oxoacyl-[acyl-carrier-protein] reductase FabG (246 aa).

NADP(+) contacts are provided by residues 11–14 (GASR), 62–63 (NV), and Asn-89. Substrate is bound at residue Ser-141. Residue Tyr-154 is the Proton acceptor of the active site. NADP(+) is bound by residues 154-158 (YVATK) and Ile-187.

Belongs to the short-chain dehydrogenases/reductases (SDR) family. In terms of assembly, homotetramer.

It catalyses the reaction a (3R)-hydroxyacyl-[ACP] + NADP(+) = a 3-oxoacyl-[ACP] + NADPH + H(+). Its pathway is lipid metabolism; fatty acid biosynthesis. Functionally, catalyzes the NADPH-dependent reduction of beta-ketoacyl-ACP substrates to beta-hydroxyacyl-ACP products, the first reductive step in the elongation cycle of fatty acid biosynthesis. This is 3-oxoacyl-[acyl-carrier-protein] reductase FabG (fabG) from Staphylococcus aureus (strain Mu50 / ATCC 700699).